An 86-amino-acid chain; its full sequence is MANIKSQKKRVLTNEKAHLRNVAVKSGLKTAIRATREAIAAGDKAAAEAAYKVAAQKLDKAAGAGVIHKNQAANRKSGLAVAINAL.

This sequence belongs to the bacterial ribosomal protein bS20 family.

Its function is as follows. Binds directly to 16S ribosomal RNA. This Bifidobacterium longum (strain DJO10A) protein is Small ribosomal subunit protein bS20.